Reading from the N-terminus, the 157-residue chain is Small ribosomal subunit protein uS7 (157 aa).

It belongs to the universal ribosomal protein uS7 family. Part of the 30S ribosomal subunit. Contacts proteins S9 and S11.

One of the primary rRNA binding proteins, it binds directly to 16S rRNA where it nucleates assembly of the head domain of the 30S subunit. Is located at the subunit interface close to the decoding center, probably blocks exit of the E-site tRNA. This Eikenella corrodens protein is Small ribosomal subunit protein uS7.